The primary structure comprises 156 residues: ATP synthase subunit b (156 aa).

Residues 7–26 form a helical membrane-spanning segment; that stretch reads LIGQLIAFALFVAFCMKYVW.

This sequence belongs to the ATPase B chain family. In terms of assembly, F-type ATPases have 2 components, F(1) - the catalytic core - and F(0) - the membrane proton channel. F(1) has five subunits: alpha(3), beta(3), gamma(1), delta(1), epsilon(1). F(0) has three main subunits: a(1), b(2) and c(10-14). The alpha and beta chains form an alternating ring which encloses part of the gamma chain. F(1) is attached to F(0) by a central stalk formed by the gamma and epsilon chains, while a peripheral stalk is formed by the delta and b chains.

The protein resides in the cell inner membrane. Functionally, f(1)F(0) ATP synthase produces ATP from ADP in the presence of a proton or sodium gradient. F-type ATPases consist of two structural domains, F(1) containing the extramembraneous catalytic core and F(0) containing the membrane proton channel, linked together by a central stalk and a peripheral stalk. During catalysis, ATP synthesis in the catalytic domain of F(1) is coupled via a rotary mechanism of the central stalk subunits to proton translocation. In terms of biological role, component of the F(0) channel, it forms part of the peripheral stalk, linking F(1) to F(0). This chain is ATP synthase subunit b, found in Haemophilus ducreyi (strain 35000HP / ATCC 700724).